Here is a 456-residue protein sequence, read N- to C-terminus: tRNA-2-methylthio-N(6)-dimethylallyladenosine synthase (456 aa).

The MTTase N-terminal domain maps to 6–123 (KHVYIETYGC…LPNLIEEAQR (118 aa)). 6 residues coordinate [4Fe-4S] cluster: Cys-15, Cys-52, Cys-86, Cys-160, Cys-164, and Cys-167. The Radical SAM core domain occupies 146 to 380 (RAEGPTAYVS…RILEMAASIS (235 aa)). Positions 381–444 (EAMVGTEQWV…KNSLRGRLIE (64 aa)) constitute a TRAM domain.

It belongs to the methylthiotransferase family. MiaB subfamily. As to quaternary structure, monomer. It depends on [4Fe-4S] cluster as a cofactor.

The protein resides in the cytoplasm. The enzyme catalyses N(6)-dimethylallyladenosine(37) in tRNA + (sulfur carrier)-SH + AH2 + 2 S-adenosyl-L-methionine = 2-methylsulfanyl-N(6)-dimethylallyladenosine(37) in tRNA + (sulfur carrier)-H + 5'-deoxyadenosine + L-methionine + A + S-adenosyl-L-homocysteine + 2 H(+). Functionally, catalyzes the methylthiolation of N6-(dimethylallyl)adenosine (i(6)A), leading to the formation of 2-methylthio-N6-(dimethylallyl)adenosine (ms(2)i(6)A) at position 37 in tRNAs that read codons beginning with uridine. In Dichelobacter nodosus (strain VCS1703A), this protein is tRNA-2-methylthio-N(6)-dimethylallyladenosine synthase.